The chain runs to 95 residues: Cytosolic calcium-binding protein 3 (95 aa).

6 consecutive repeat copies span residues 30–35 (VEDAEK), 39–43 (DEEEK), 54–59 (VEEEKK), 67–71 (PEEKK), 75–79 (LEEKQ), and 90–94 (VEKAK). The segment at 30–94 (VEDAEKTNED…AEEVAVEKAK (65 aa)) is 6 X 5 AA approximate repeats of V-E-E-K-K. The tract at residues 54–95 (VEEEKKAEEVTETPEEKKTEALEEKQTEVAAAEEVAVEKAKE) is disordered. Positions 55-80 (EEEKKAEEVTETPEEKKTEALEEKQT) are enriched in basic and acidic residues.

In terms of tissue distribution, low levels in roots (e.g. in cambium) and barely expressed in stems, shoots, flowers, siliques and leaves.

It localises to the cytoplasm. The protein resides in the cytosol. In terms of biological role, binds calcium Ca(2+) and may act as a signal mediator to buffer Ca(2+). This chain is Cytosolic calcium-binding protein 3, found in Arabidopsis thaliana (Mouse-ear cress).